The following is a 377-amino-acid chain: RING finger protein 215 (377 aa).

The Cytoplasmic portion of the chain corresponds to 1-22 (MGPAARPALRSPPPPPPPPPSP). The tract at residues 1–22 (MGPAARPALRSPPPPPPPPPSP) is disordered. Pro residues predominate over residues 10-22 (RSPPPPPPPPPSP). The helical transmembrane segment at 23 to 43 (LLLLLPLLPLWLGLAGPGAAA) threads the bilayer. Over 44-250 (DGSEPAAGAG…GGSRAQEQKP (207 aa)) the chain is Extracellular. Asn186 carries N-linked (GlcNAc...) asparagine glycosylation. The helical transmembrane segment at 251 to 271 (LQQLWNAILLVAMLLCTGLVV) threads the bilayer. The Cytoplasmic portion of the chain corresponds to 272–377 (QAQRQASRQS…NVLGNRYSDD (106 aa)). An RING-type; atypical zinc finger spans residues 325-366 (CAVCLDYFCNKQWLRVLPCKHEFHRDCVDPWLMLQQTCPLCK).

Its subcellular location is the membrane. In Homo sapiens (Human), this protein is RING finger protein 215 (RNF215).